Reading from the N-terminus, the 257-residue chain is MRRLNFEKVVTRLVEFIKENAKQGVVIGISGGVDSATVAYLATKALGKDKILGLIMPYYENKDVEDAKLVAENLGIRYKIINIKPIVDTIQSSLDVALDRKSLGNIMARVRMVLLYSYANSLGRLVLGTSNRSEFLTGYFTKWGDGASDYAPLINIYKTEVWEVARIIGVPQSIVEKKPSAGLWEGQTDEDELGISYKLLDELLWRLVDLKMSKEEIANELNVSEEIVEHVEKLVKNSEHKRRLPIGPKVDDLIIEP.

Position 28–35 (G28–S35) interacts with ATP. D34 contributes to the Mg(2+) binding site. Residue R109 coordinates deamido-NAD(+). An ATP-binding site is contributed by T129. A Mg(2+)-binding site is contributed by E134. Deamido-NAD(+) is bound by residues K142 and D149. 2 residues coordinate ATP: K158 and S180. H240–K241 is a deamido-NAD(+) binding site.

Belongs to the NAD synthetase family. In terms of assembly, homodimer.

It carries out the reaction deamido-NAD(+) + NH4(+) + ATP = AMP + diphosphate + NAD(+) + H(+). It functions in the pathway cofactor biosynthesis; NAD(+) biosynthesis; NAD(+) from deamido-NAD(+) (ammonia route): step 1/1. Functionally, catalyzes the ATP-dependent amidation of deamido-NAD to form NAD. Uses ammonia as a nitrogen source. The sequence is that of NH(3)-dependent NAD(+) synthetase from Pyrococcus furiosus (strain ATCC 43587 / DSM 3638 / JCM 8422 / Vc1).